The sequence spans 162 residues: NADH-quinone oxidoreductase subunit I (162 aa).

4Fe-4S ferredoxin-type domains lie at Leu-52 to Gly-82 and Thr-93 to Asn-122. [4Fe-4S] cluster is bound by residues Cys-62, Cys-65, Cys-68, Cys-72, Cys-102, Cys-105, Cys-108, and Cys-112.

This sequence belongs to the complex I 23 kDa subunit family. In terms of assembly, NDH-1 is composed of 14 different subunits. Subunits NuoA, H, J, K, L, M, N constitute the membrane sector of the complex. Requires [4Fe-4S] cluster as cofactor.

It localises to the cell inner membrane. The enzyme catalyses a quinone + NADH + 5 H(+)(in) = a quinol + NAD(+) + 4 H(+)(out). Its function is as follows. NDH-1 shuttles electrons from NADH, via FMN and iron-sulfur (Fe-S) centers, to quinones in the respiratory chain. The immediate electron acceptor for the enzyme in this species is believed to be ubiquinone. Couples the redox reaction to proton translocation (for every two electrons transferred, four hydrogen ions are translocated across the cytoplasmic membrane), and thus conserves the redox energy in a proton gradient. The sequence is that of NADH-quinone oxidoreductase subunit I from Methylobacterium sp. (strain 4-46).